The following is a 174-amino-acid chain: Protein C (174 aa).

Belongs to the morbillivirus protein C family.

The polypeptide is Protein C (P/V/C) (Phocine distemper virus (PDV)).